A 200-amino-acid chain; its full sequence is NADH-quinone oxidoreductase subunit C (200 aa).

The protein belongs to the complex I 30 kDa subunit family. As to quaternary structure, NDH-1 is composed of 14 different subunits. Subunits NuoB, C, D, E, F, and G constitute the peripheral sector of the complex.

The protein localises to the cell inner membrane. It catalyses the reaction a quinone + NADH + 5 H(+)(in) = a quinol + NAD(+) + 4 H(+)(out). In terms of biological role, NDH-1 shuttles electrons from NADH, via FMN and iron-sulfur (Fe-S) centers, to quinones in the respiratory chain. The immediate electron acceptor for the enzyme in this species is believed to be ubiquinone. Couples the redox reaction to proton translocation (for every two electrons transferred, four hydrogen ions are translocated across the cytoplasmic membrane), and thus conserves the redox energy in a proton gradient. The polypeptide is NADH-quinone oxidoreductase subunit C (Parvibaculum lavamentivorans (strain DS-1 / DSM 13023 / NCIMB 13966)).